Reading from the N-terminus, the 76-residue chain is DNA-directed RNA polymerase subunit epsilon (76 aa).

This sequence belongs to the RNA polymerase subunit epsilon family. In terms of assembly, RNAP is composed of a core of 2 alpha, a beta and a beta' subunit. The core is associated with a delta subunit, and at least one of epsilon or omega. When a sigma factor is associated with the core the holoenzyme is formed, which can initiate transcription.

It carries out the reaction RNA(n) + a ribonucleoside 5'-triphosphate = RNA(n+1) + diphosphate. Its function is as follows. A non-essential component of RNA polymerase (RNAP). This chain is DNA-directed RNA polymerase subunit epsilon, found in Streptococcus pyogenes serotype M1.